An 88-amino-acid polypeptide reads, in one-letter code: Small ribosomal subunit protein bS20 (88 aa).

It belongs to the bacterial ribosomal protein bS20 family.

Binds directly to 16S ribosomal RNA. This chain is Small ribosomal subunit protein bS20, found in Rhodopseudomonas palustris (strain BisB18).